The primary structure comprises 337 residues: 2-ketoarginine methyltransferase (337 aa).

The protein belongs to the 2-ketoarginine methyltransferase family.

The enzyme catalyses 5-guanidino-2-oxopentanoate + S-adenosyl-L-methionine = (3R)-5-guanidino-3-methyl-2-oxopentanoate + S-adenosyl-L-homocysteine + H(+). The protein operates within antibiotic biosynthesis. In terms of biological role, S-adenosyl-L-methionine-dependent methyltransferase involved in the formation of the rare amino acid 3-methylarginine (MeArg), which is incorporated into the peptidyl nucleoside antibiotic arginomycin. Transfers the methyl group from S-adenosyl-L-methionine into 5-guanidino-2-oxopentanoate acid to yield 5-guanidino-3-methyl-2-oxopentanoate, a precursor of MeArg. The polypeptide is 2-ketoarginine methyltransferase (Streptomyces arginensis).